A 133-amino-acid chain; its full sequence is Small ribosomal subunit protein uS8 (133 aa).

Belongs to the universal ribosomal protein uS8 family. Part of the 30S ribosomal subunit. Contacts proteins S5 and S12.

Its function is as follows. One of the primary rRNA binding proteins, it binds directly to 16S rRNA central domain where it helps coordinate assembly of the platform of the 30S subunit. This Anaplasma phagocytophilum (strain HZ) protein is Small ribosomal subunit protein uS8.